Consider the following 294-residue polypeptide: Aquaporin NIP2-2 (294 aa).

Helical transmembrane passes span 54 to 74 (VISEVVATFLLVFVTCGAASI) and 88 to 108 (SVAGGLIVTVMIYATGHISGA). Positions 111-113 (NPA) match the NPA 1 motif. A run of 3 helical transmembrane segments spans residues 129 to 151 (VPFYWAAQFTGAMCAAFVLKAVL), 169 to 189 (ALLIEIVVTFNMMFVTCAVAT), and 197 to 217 (LAGLAVGSAVCITSIFAGPVS). The NPA 2 signature appears at 222 to 224 (NPA). The helical transmembrane segment at 235-255 (VFTGLWIYFLGPVIGTLSGAW) threads the bilayer.

This sequence belongs to the MIP/aquaporin (TC 1.A.8) family. NIP (TC 1.A.8.12) subfamily.

The protein resides in the membrane. Its function is as follows. Aquaporins facilitate the transport of water and small neutral solutes across cell membranes. The protein is Aquaporin NIP2-2 (NIP2-2) of Zea mays (Maize).